The chain runs to 438 residues: Aspartate--tRNA(Asp) ligase (438 aa).

Glu-170 is a binding site for L-aspartate. The aspartate stretch occupies residues 192 to 195 (QLYK). Arg-214 is an L-aspartate binding site. ATP-binding positions include 214 to 216 (RAE), 222 to 224 (RHL), and Glu-361. The Mg(2+) site is built by Glu-361 and Ser-364. 2 residues coordinate L-aspartate: Ser-364 and Arg-368. 409-412 (GAER) is an ATP binding site.

This sequence belongs to the class-II aminoacyl-tRNA synthetase family. Type 2 subfamily. In terms of assembly, homodimer. It depends on Mg(2+) as a cofactor.

It localises to the cytoplasm. The catalysed reaction is tRNA(Asp) + L-aspartate + ATP = L-aspartyl-tRNA(Asp) + AMP + diphosphate. Catalyzes the attachment of L-aspartate to tRNA(Asp) in a two-step reaction: L-aspartate is first activated by ATP to form Asp-AMP and then transferred to the acceptor end of tRNA(Asp). Is specific for tRNA(Asp) since it aspartylates tRNA(Asn) 3 orders of magnitude less efficiently than tRNA(Asp). The chain is Aspartate--tRNA(Asp) ligase from Thermococcus kodakarensis (strain ATCC BAA-918 / JCM 12380 / KOD1) (Pyrococcus kodakaraensis (strain KOD1)).